The sequence spans 128 residues: Small ribosomal subunit protein bS6 (128 aa).

Positions 105 to 128 (AKVTEEEPVEAAPEAKVETTTEEE) are disordered. The span at 117 to 128 (PEAKVETTTEEE) shows a compositional bias: basic and acidic residues.

Belongs to the bacterial ribosomal protein bS6 family.

Functionally, binds together with bS18 to 16S ribosomal RNA. This Geotalea daltonii (strain DSM 22248 / JCM 15807 / FRC-32) (Geobacter daltonii) protein is Small ribosomal subunit protein bS6.